Reading from the N-terminus, the 188-residue chain is Inactive cysteine S-methyltransferase OspZ (188 aa).

It belongs to the NleE/OspZ family.

Its subcellular location is the secreted. It localises to the host cytoplasm. The protein localises to the host nucleus. Its function is as follows. Inactive effector protein: in contrast to other members of the family, does not have the ability to inhibit host cell NF-kappa-B activation. Probably lacks cysteine S-methyltransferase activity due to its inability to bind S-adenosyl-L-methionine at the C-terminus. The chain is Inactive cysteine S-methyltransferase OspZ from Shigella flexneri.